The primary structure comprises 167 residues: uncharacterized protein (167 aa).

The signal sequence occupies residues 1–25 (MPFSVTKFSLIFVALLLAEALVAQS).

This is an uncharacterized protein from Caenorhabditis elegans.